A 99-amino-acid chain; its full sequence is Small integral membrane protein 9 (99 aa).

The first 26 residues, 1–26 (MEPQKLLIIGFLLCSLTCLLLETVAS), serve as a signal peptide directing secretion. The Extracellular segment spans residues 27–73 (SPLPLSALGIQEKTGSKPRSGGNHRSWLNNFRDYLWQLIKSALPPAA). Residues 74-94 (IVAFLLTSALMGILCCFTILV) traverse the membrane as a helical segment. Residues 95 to 99 (VDPVH) are Cytoplasmic-facing.

The protein localises to the cell membrane. This Homo sapiens (Human) protein is Small integral membrane protein 9 (SMIM9).